We begin with the raw amino-acid sequence, 144 residues long: Small ribosomal subunit protein uS19 (144 aa).

This sequence belongs to the universal ribosomal protein uS19 family.

The protein is Small ribosomal subunit protein uS19 (rps15) of Dictyostelium discoideum (Social amoeba).